Reading from the N-terminus, the 979-residue chain is Disks large-associated protein 3 (979 aa).

The segment covering 1 to 10 (MRGYHGDRGS) has biased composition (basic and acidic residues). Disordered stretches follow at residues 1 to 20 (MRGY…FADQ), 52 to 95 (AGLG…MYPG), 136 to 169 (FHTL…SPSR), 182 to 291 (AKSH…CLEG), 400 to 429 (AMGD…TRRS), and 537 to 581 (FRKA…RCSS). Residue S58 is modified to Phosphoserine. Over residues 73-86 (PEGGPAGAGVGGGS) the composition is skewed to gly residues. A compositionally biased stretch (basic and acidic residues) spans 190–202 (PGKRDYNGPKAEG). Gly residues predominate over residues 203–218 (RGGSGGDSYPGPGSGG). Over residues 221–246 (TSHHHHHHHHHHHHQSRHGKRSKSKD) the composition is skewed to basic residues. Phosphoserine is present on residues S406, S409, S412, and S416. A compositionally biased stretch (pro residues) spans 540–549 (APPPIPPGSQ). Phosphoserine occurs at positions 643 and 645. Disordered stretches follow at residues 741 to 790 (EGYP…RASP) and 908 to 940 (EEKK…DRQR). Basic and acidic residues-rich tracts occupy residues 769 to 779 (GRRDSWIERGS) and 927 to 940 (PVKE…DRQR). Phosphoserine is present on residues S932, S935, and S967.

This sequence belongs to the SAPAP family. Interacts with DLG4/PSD-95.

The protein localises to the cell membrane. It localises to the postsynaptic density. The protein resides in the synapse. Functionally, may play a role in the molecular organization of synapses and neuronal cell signaling. Could be an adapter protein linking ion channel to the subsynaptic cytoskeleton. May induce enrichment of PSD-95/SAP90 at the plasma membrane. The chain is Disks large-associated protein 3 (DLGAP3) from Homo sapiens (Human).